The sequence spans 825 residues: MDEVSPTKHFTSKPLLPTKTPRDKAISHYVNALNSPRNVVKTETPECGIQIIDGDGNFASTDTRERPSLKNYILSKPEFLKRGMDYNAVGILGAQSSGKSTLLNYLFNTKFRILNEVMGRSRTTHGVWMALSGKESNIVVFDLEGTDGSAREDDYSFERKTSLFSLSVCSVLMVNLWSHDVGRFQASNMSLLKTVFELNLQLFVKEETPKTLIVFVIRDREADTPFDQIERDIMEDIMRIWDTVIPPEEFINSPINRFFDFQFTSLPHYEHFYENFVEEVNLMKKKFDPKNKDTYFLPQYNKEIPADGLSCFCEQIWETIKDNKDLDLPSQREMLSRYRCTEISNQIYKEFNDSIKGEMKILKKGNIIEDFKKVFTKQIDAALERYKEVTERYMETIVEEIEEQLKKQLCGLVESLFERQAELMEKAIGKRVKGEFTIIRNEYALLYNKKEFNPMKYQKYSQELSRTKAVIERDWRKQFDDSVPKFLAEKTKEKFNSVCKDIGIAYEDSVSKMTEVMKQHFGDYLESTIKPKITPYLEACKKDMWKNIRNVINIQFTNGFNKLEEGFKTCSNMNKDTIEEEIKKSKTDILNSIKELVIKRKIELPYLLERKFNNMFRFDNKGLPRKWEPTDDVDTLYFAARDETEDILDMYCYFRIEESDDQYKFTINYRDGDLPSESIETLPKGADEEKVILNHEERKELIETLNGFFEKGYLIALREKENSEIKYQIPLYLIVLVVFFGFDEFIAILTNPLLFILTLIIGGGVYIGYKLNLGGVAKNYIQYLLSMSLSSTMEYLRTIPFFTPLIDKVWPKDDNNTEETQEEIK.

Residues 1–21 form a disordered region; that stretch reads MDEVSPTKHFTSKPLLPTKTP. The Cytoplasmic portion of the chain corresponds to 1–728; sequence MDEVSPTKHF…EKENSEIKYQ (728 aa). Residues 83-305 form the GB1/RHD3-type G domain; that stretch reads GMDYNAVGIL…FLPQYNKEIP (223 aa). 93–100 is a GTP binding site; the sequence is GAQSSGKS. The stretch at 373–397 forms a coiled coil; the sequence is KVFTKQIDAALERYKEVTERYMETI. The chain crosses the membrane as a helical span at residues 729–749; that stretch reads IPLYLIVLVVFFGFDEFIAIL. At 750 to 752 the chain is on the lumenal side; sequence TNP. A helical membrane pass occupies residues 753–773; that stretch reads LLFILTLIIGGGVYIGYKLNL. The Cytoplasmic segment spans residues 774–825; it reads GGVAKNYIQYLLSMSLSSTMEYLRTIPFFTPLIDKVWPKDDNNTEETQEEIK.

Belongs to the TRAFAC class dynamin-like GTPase superfamily. GB1/RHD3 GTPase family. RHD3 subfamily.

Its subcellular location is the endoplasmic reticulum membrane. Probable GTP-binding protein that may be involved in cell development. This chain is Protein SEY1 homolog 2, found in Entamoeba histolytica (strain ATCC 30459 / HM-1:IMSS / ABRM).